The primary structure comprises 367 residues: Farnesyl pyrophosphate synthase (367 aa).

Isopentenyl diphosphate is bound by residues Lys71, Arg74, and Gln110. Mg(2+) is bound by residues Asp117 and Asp121. Arg126 contributes to the dimethylallyl diphosphate binding site. Residue Arg127 coordinates isopentenyl diphosphate. Dimethylallyl diphosphate is bound by residues Lys214, Thr215, Gln254, Lys271, and Lys280.

It belongs to the FPP/GGPP synthase family. As to quaternary structure, homodimer. Mg(2+) is required as a cofactor.

Its subcellular location is the cytoplasm. The enzyme catalyses isopentenyl diphosphate + dimethylallyl diphosphate = (2E)-geranyl diphosphate + diphosphate. It carries out the reaction isopentenyl diphosphate + (2E)-geranyl diphosphate = (2E,6E)-farnesyl diphosphate + diphosphate. The protein operates within isoprenoid biosynthesis; farnesyl diphosphate biosynthesis; farnesyl diphosphate from geranyl diphosphate and isopentenyl diphosphate: step 1/1. It functions in the pathway isoprenoid biosynthesis; geranyl diphosphate biosynthesis; geranyl diphosphate from dimethylallyl diphosphate and isopentenyl diphosphate: step 1/1. Catalyzes the sequential condensation of isopentenyl pyrophosphate with the allylic pyrophosphates, dimethylallyl pyrophosphate, and then with the resultant geranylpyrophosphate to the ultimate product farnesyl pyrophosphate. The sequence is that of Farnesyl pyrophosphate synthase (FDPS) from Gallus gallus (Chicken).